Reading from the N-terminus, the 127-residue chain is Major sperm protein 10/36/56/76 (127 aa).

Residue alanine 2 is modified to N-acetylalanine. The 118-residue stretch at 9 to 126 (DIQTQPNAKI…RRKNLPIEYN (118 aa)) folds into the MSP domain.

As to expression, sperm.

The protein localises to the cell projection. It localises to the pseudopodium. It is found in the cytoplasm. Its subcellular location is the cytoskeleton. Its function is as follows. Central component in molecular interactions underlying sperm crawling. Forms an extensive filament system that extends from sperm villipoda, along the leading edge of the pseudopod. This is Major sperm protein 10/36/56/76 (msp-10) from Caenorhabditis elegans.